The following is a 247-amino-acid chain: Phosphoribosylaminoimidazole-succinocarboxamide synthase (247 aa).

Belongs to the SAICAR synthetase family.

It carries out the reaction 5-amino-1-(5-phospho-D-ribosyl)imidazole-4-carboxylate + L-aspartate + ATP = (2S)-2-[5-amino-1-(5-phospho-beta-D-ribosyl)imidazole-4-carboxamido]succinate + ADP + phosphate + 2 H(+). The protein operates within purine metabolism; IMP biosynthesis via de novo pathway; 5-amino-1-(5-phospho-D-ribosyl)imidazole-4-carboxamide from 5-amino-1-(5-phospho-D-ribosyl)imidazole-4-carboxylate: step 1/2. The chain is Phosphoribosylaminoimidazole-succinocarboxamide synthase from Gloeobacter violaceus (strain ATCC 29082 / PCC 7421).